The primary structure comprises 330 residues: 4-hydroxythreonine-4-phosphate dehydrogenase (330 aa).

Residues His136 and Thr137 each coordinate substrate. The a divalent metal cation site is built by His166, His211, and His266. Residues Lys274, Asn283, and Arg292 each contribute to the substrate site.

This sequence belongs to the PdxA family. Homodimer. Requires Zn(2+) as cofactor. Mg(2+) is required as a cofactor. The cofactor is Co(2+).

Its subcellular location is the cytoplasm. The enzyme catalyses 4-(phosphooxy)-L-threonine + NAD(+) = 3-amino-2-oxopropyl phosphate + CO2 + NADH. Its pathway is cofactor biosynthesis; pyridoxine 5'-phosphate biosynthesis; pyridoxine 5'-phosphate from D-erythrose 4-phosphate: step 4/5. In terms of biological role, catalyzes the NAD(P)-dependent oxidation of 4-(phosphooxy)-L-threonine (HTP) into 2-amino-3-oxo-4-(phosphooxy)butyric acid which spontaneously decarboxylates to form 3-amino-2-oxopropyl phosphate (AHAP). The sequence is that of 4-hydroxythreonine-4-phosphate dehydrogenase from Sodalis glossinidius (strain morsitans).